We begin with the raw amino-acid sequence, 1140 residues long: Multiple epidermal growth factor-like domains protein 10 (1140 aa).

The N-terminal stretch at methionine 1–proline 25 is a signal peptide. The segment at methionine 1 to glycine 857 is necessary for interaction with AP2M1, self-assembly and formation of the irregular, mosaic-like adhesion pattern. The Extracellular portion of the chain corresponds to leucine 26–glycine 857. One can recognise an EMI domain in the interval aspartate 30 to proline 107. 48 disulfide bridges follow: cysteine 34–cysteine 95, cysteine 60–cysteine 69, cysteine 94–cysteine 105, cysteine 109–cysteine 118, cysteine 113–cysteine 124, cysteine 126–cysteine 135, cysteine 148–cysteine 160, cysteine 154–cysteine 167, cysteine 169–cysteine 178, cysteine 191–cysteine 203, cysteine 197–cysteine 210, cysteine 212–cysteine 221, cysteine 234–cysteine 246, cysteine 240–cysteine 253, cysteine 255–cysteine 264, cysteine 281–cysteine 289, cysteine 283–cysteine 296, cysteine 298–cysteine 307, cysteine 320–cysteine 332, cysteine 326–cysteine 339, cysteine 341–cysteine 350, cysteine 409–cysteine 421, cysteine 415–cysteine 428, cysteine 430–cysteine 439, cysteine 456–cysteine 464, cysteine 458–cysteine 471, cysteine 473–cysteine 482, cysteine 495–cysteine 507, cysteine 501–cysteine 514, cysteine 516–cysteine 525, cysteine 542–cysteine 550, cysteine 544–cysteine 557, cysteine 559–cysteine 568, cysteine 581–cysteine 593, cysteine 587–cysteine 600, cysteine 602–cysteine 611, cysteine 669–cysteine 681, cysteine 675–cysteine 688, cysteine 690–cysteine 699, cysteine 716–cysteine 724, cysteine 718–cysteine 731, cysteine 733–cysteine 742, cysteine 755–cysteine 767, cysteine 761–cysteine 774, cysteine 776–cysteine 785, cysteine 802–cysteine 810, cysteine 804–cysteine 817, and cysteine 819–cysteine 828. EGF-like domains lie at valine 106 to serine 136, tryptophan 144 to glutamate 179, tyrosine 187 to glutamate 222, histidine 230 to glycine 265, serine 278 to glutamine 308, tyrosine 316 to glutamate 351, tyrosine 405 to serine 440, serine 453 to serine 483, tryptophan 491 to glutamate 526, alanine 539 to aspartate 569, tryptophan 577 to glutamine 612, phenylalanine 665 to serine 700, isoleucine 713 to threonine 743, tyrosine 751 to glutamate 786, and arginine 799 to aspartate 829. The N-linked (GlcNAc...) asparagine glycan is linked to asparagine 134. An N-linked (GlcNAc...) asparagine glycan is attached at asparagine 496. Residues alanine 858–isoleucine 878 traverse the membrane as a helical segment. At tyrosine 879–glutamate 1140 the chain is on the cytoplasmic side. The interval arginine 945 to glutamate 1140 is necessary for formation of large intracellular vacuoles. The residue at position 1030 (tyrosine 1030) is a Phosphotyrosine; by SRC. Residues tyrosine 1111 to glutamate 1140 are disordered. The span at serine 1128–glutamate 1140 shows a compositional bias: low complexity.

It belongs to the MEGF family. As to quaternary structure, homomer. Interacts with GULP1 and ABCA1. Interacts with AP2M1. Does not interact with MEGF11. Binds with high affinity to complement C1q. Interacts (via the cytoplasmic domain) with NOTCH1 (via NICD domain). Post-translationally, phosphorylated on tyrosine residues. Phosphorylation at Tyr-1030 may be important for muscle cell proliferation. Ubiquitinated; mono- and polyubiquitinated forms are detected. In terms of tissue distribution, expressed in muscle (at protein level).

The protein resides in the cell membrane. It is found in the cell projection. The protein localises to the phagocytic cup. Its function is as follows. Membrane receptor involved in phagocytosis by macrophages and astrocytes of apoptotic cells. Receptor for C1q, an eat-me signal, that binds phosphatidylserine expressed on the surface of apoptotic cells. Cooperates with ABCA1 within the process of engulfment. Promotes the formation of large intracellular vacuoles and may be responsible for the uptake of amyloid-beta peptides. Necessary for astrocyte-dependent apoptotic neuron clearance in the developing cerebellum. Plays role in muscle cell proliferation, adhesion and motility. Is also an essential factor in the regulation of myogenesis. Controls the balance between skeletal muscle satellite cells proliferation and differentiation through regulation of the notch signaling pathway. May also function in the mosaic spacing of specific neuron subtypes in the retina through homotypic retinal neuron repulsion. Mosaics provide a mechanism to distribute each cell type evenly across the retina, ensuring that all parts of the visual field have access to a full set of processing elements. The protein is Multiple epidermal growth factor-like domains protein 10 of Homo sapiens (Human).